The following is a 466-amino-acid chain: Ornithine decarboxylase (466 aa).

Lys116 is subject to N6-(pyridoxal phosphate)lysine. Pyridoxal 5'-phosphate contacts are provided by residues Ser247, Gly286, and 318–321; that span reads EPGR. 362-363 is a binding site for substrate; the sequence is FD. The active-site Proton donor; shared with dimeric partner is the Cys411. Asp412 provides a ligand contact to substrate. Tyr441 is a binding site for pyridoxal 5'-phosphate.

This sequence belongs to the Orn/Lys/Arg decarboxylase class-II family. Homodimer. Only the dimer is catalytically active, as the active sites are constructed of residues from both monomers. Requires pyridoxal 5'-phosphate as cofactor.

Its subcellular location is the cytoplasm. The enzyme catalyses L-ornithine + H(+) = putrescine + CO2. The protein operates within amine and polyamine biosynthesis; putrescine biosynthesis via L-ornithine pathway; putrescine from L-ornithine: step 1/1. With respect to regulation, inhibited by antizyme (AZ) OAZ1 in response to polyamine levels. AZ inhibits the assembly of the functional homodimer by binding to ODC monomers and targeting them for ubiquitin-independent proteolytic destruction by the 26S proteasome. Functionally, catalyzes the first and rate-limiting step of polyamine biosynthesis that converts ornithine into putrescine, which is the precursor for the polyamines, spermidine and spermine. Polyamines are essential for cell proliferation and are implicated in cellular processes, ranging from DNA replication to apoptosis. In Saccharomyces cerevisiae (strain ATCC 204508 / S288c) (Baker's yeast), this protein is Ornithine decarboxylase.